The chain runs to 211 residues: V-type ATP synthase subunit D (211 aa).

The protein belongs to the V-ATPase D subunit family.

In terms of biological role, produces ATP from ADP in the presence of a proton gradient across the membrane. The polypeptide is V-type ATP synthase subunit D (Enterococcus faecalis (strain ATCC 700802 / V583)).